Reading from the N-terminus, the 688-residue chain is Eukaryotic translation initiation factor 3 subunit B (688 aa).

Residues 1-32 form a disordered region; sequence MAKKKGENYDSDGGDDQDYDEEPNFDDPEGFV. Positions 9–32 are enriched in acidic residues; sequence YDSDGGDDQDYDEEPNFDDPEGFV. The RRM domain occupies 57-141; sequence NVIVVDNIPV…HTLLVNLFSD (85 aa). 6 WD repeats span residues 208–246, 247–287, 291–329, 332–367, 440–482, and 527–572; these read RDRF…KINK, FPHS…EKRS, DGTS…LLDK, IKVQ…TLLE, EVKE…EPTM, and GDHF…KRVN. Positions 613–642 form a coiled coil; it reads RIRMTRASKELLEKRAKLREQFVEYRTKRV.

This sequence belongs to the eIF-3 subunit B family. Component of the eukaryotic translation initiation factor 3 (eIF-3) complex.

The protein localises to the cytoplasm. RNA-binding component of the eukaryotic translation initiation factor 3 (eIF-3) complex, which is involved in protein synthesis of a specialized repertoire of mRNAs and, together with other initiation factors, stimulates binding of mRNA and methionyl-tRNAi to the 40S ribosome. The eIF-3 complex specifically targets and initiates translation of a subset of mRNAs involved in cell proliferation. This is Eukaryotic translation initiation factor 3 subunit B from Aedes aegypti (Yellowfever mosquito).